The sequence spans 1238 residues: Kinesin-related protein 10 (1238 aa).

A Kinesin motor domain is found at Ser16–Ile374. Residue Gly116–Thr123 participates in ATP binding. Residues Asn417–Ser436 show a composition bias toward low complexity. The interval Asn417–Asn503 is disordered. Over residues Phe437–Tyr464 the composition is skewed to polar residues. Residues Asp468–Asp497 are compositionally biased toward acidic residues. Residues Thr527 to Ser602 adopt a coiled-coil conformation. Composition is skewed to low complexity over residues Asn726 to Asn795, Leu918 to Leu934, and Asn961 to Pro971. Disordered stretches follow at residues Asn726–Arg802, Glu891–Pro971, Thr1134–Thr1156, and Ala1191–Lys1238. A compositionally biased stretch (polar residues) spans Ala1191–Val1203. Residues Pro1215 to Thr1228 are compositionally biased toward low complexity. Over residues Thr1229–Lys1238 the composition is skewed to polar residues.

This sequence belongs to the TRAFAC class myosin-kinesin ATPase superfamily. Kinesin family.

The protein localises to the cytoplasm. It is found in the cytoskeleton. Functionally, microtubule-associated force-producing protein that plays a role in organelle transport. Its motor activity is directed toward the microtubule's plus end. Cooperates with kif8 and dynein to organize interphase microtubules. This Dictyostelium discoideum (Social amoeba) protein is Kinesin-related protein 10 (kif10).